Reading from the N-terminus, the 483-residue chain is FAD-linked oxidoreductase pgmH (483 aa).

The 162-residue stretch at 54 to 215 folds into the FAD-binding PCMH-type domain; that stretch reads SIRLATLVVY…TEFKYRVHKQ (162 aa).

This sequence belongs to the oxygen-dependent FAD-linked oxidoreductase family. It depends on FAD as a cofactor.

It functions in the pathway pigment biosynthesis. The protein operates within secondary metabolite biosynthesis. FAD-linked oxidoreductase; part of the gene cluster that mediates the biosynthesis of pleosporalin A, ascomycone A, as well as a third cryptic naphthoquinone derived pigment, all responsible for the coloration of conidia. Essential for the production of pleosporalin A, but not the 2 other final products. The pathway begins with the biosynthesis of the cyclized heptaketide 3-acetonyl-1,6,8-trihydroxy-2-naphthaldehyde by the NR-PKS pgmA. The C-6 hydroxyl group is further methylated by the O-methyltransferase pgmB to yield fusarubinaldehyde which is in turn oxidized by the cytochrome P450 monooxygenase pgmC at C-9. The C-1 hydroxyl group is then methylated spontaneously. Although pgmE, pgmD and pgmH are essential for the production of pleosporalin A, it is not the case for the 2 other final products and it remains difficult to assign a specific function to each enzyme. PgmF and pgmG seem not to be involved in pigment biosynthesis although they were regulated by the cluster-specific transcription factor pgmR. This Aspergillus terreus (strain NIH 2624 / FGSC A1156) protein is FAD-linked oxidoreductase pgmH.